Here is a 428-residue protein sequence, read N- to C-terminus: Glutamate-1-semialdehyde 2,1-aminomutase (428 aa).

N6-(pyridoxal phosphate)lysine is present on lysine 265.

Belongs to the class-III pyridoxal-phosphate-dependent aminotransferase family. HemL subfamily. As to quaternary structure, homodimer. Pyridoxal 5'-phosphate is required as a cofactor.

Its subcellular location is the cytoplasm. The catalysed reaction is (S)-4-amino-5-oxopentanoate = 5-aminolevulinate. It participates in porphyrin-containing compound metabolism; protoporphyrin-IX biosynthesis; 5-aminolevulinate from L-glutamyl-tRNA(Glu): step 2/2. The protein is Glutamate-1-semialdehyde 2,1-aminomutase of Aeromonas salmonicida (strain A449).